Consider the following 291-residue polypeptide: B-lymphocyte antigen CD20 (291 aa).

Residues 1–44 are Cytoplasmic-facing; sequence MSGPFPAEPTKGPLAMQPAPKVNLKRTSSLVGPTQSFFMRESKA. Ser-29 carries the post-translational modification Phosphoserine. Residues 45–65 traverse the membrane as a helical segment; it reads LGAVQIMNGLFHITLGGLLMI. At 66 to 68 the chain is on the extracellular side; the sequence is PTG. Residues 69 to 89 form a helical membrane-spanning segment; that stretch reads VFAPICLSVWYPLWGGIMYII. At 90 to 111 the chain is on the cytoplasmic side; sequence SGSLLAAAAEKTSRKSLVKAKV. The helical transmembrane segment at 112–132 threads the bilayer; it reads IMSSLSLFAAISGIILSIMDI. Residues 133–182 lie on the Extracellular side of the membrane; that stretch reads LNMTLSHFLKMRRLELIQTSKPYVDIYDCEPSNSSEKNSPSTQYCNSIQS. The helical transmembrane segment at 183 to 203 threads the bilayer; sequence VFLGILSAMLISAFFQKLVTA. Residues 204–291 lie on the Cytoplasmic side of the membrane; the sequence is GIVENEWKRM…SLPVENEIAP (88 aa). Residue Cys-214 is the site of S-palmitoyl cysteine attachment. At Ser-219 the chain carries Phosphoserine. Position 233 is a phosphothreonine (Thr-233). Residues 261-270 are compositionally biased toward acidic residues; sequence VQEEEEEEAE. The interval 261–291 is disordered; the sequence is VQEEEEEEAEINFPAPPQEQESLPVENEIAP.

It belongs to the MS4A family. As to quaternary structure, forms homotetramers. Interacts with the heavy and light chains of cell surface IgM, the antigen-binding components of the BCR. In terms of processing, phosphorylated.

Its subcellular location is the cell membrane. Its function is as follows. B-lymphocyte-specific membrane protein that plays a role in the regulation of cellular calcium influx necessary for the development, differentiation, and activation of B-lymphocytes. Functions as a store-operated calcium (SOC) channel component promoting calcium influx after activation by the B-cell receptor/BCR. This is B-lymphocyte antigen CD20 (Ms4a1) from Mus musculus (Mouse).